Here is a 287-residue protein sequence, read N- to C-terminus: MSTINLPLNLTVRVHPVVLFQIVDAYERRNADSERVIGTLLGSVDKGVVEVTNCFCLPHKEHTDQVEAELGYASDLYELNQRVNASENIVGWWATGQEVTNHSSVIHEYYARECTNPVHLTLDTSLTGARMGIKAYVCVSLGVPGGKSGCMFTPINVEVTSYEPEIVGLQLCMKTIGVQSNPSRPRTVSPMLDLAQVTDASDKLLALLSDVLAYVEDVLSEKQQPENTVGRALLDLIHSVPNMTGDQFAQMFNSNVKDLLMVVTLSQLIKTQLQLNEKLTSLTSFLN.

The MPN domain maps to 12–142 (VRVHPVVLFQ…IKAYVCVSLG (131 aa)).

Belongs to the eIF-3 subunit F family. Component of the eukaryotic translation initiation factor 3 (eIF-3) complex.

It is found in the cytoplasm. Its function is as follows. Component of the eukaryotic translation initiation factor 3 (eIF-3) complex, which is involved in protein synthesis of a specialized repertoire of mRNAs and, together with other initiation factors, stimulates binding of mRNA and methionyl-tRNAi to the 40S ribosome. The eIF-3 complex specifically targets and initiates translation of a subset of mRNAs involved in cell proliferation. This Anopheles gambiae (African malaria mosquito) protein is Eukaryotic translation initiation factor 3 subunit F.